Here is a 70-residue protein sequence, read N- to C-terminus: Large ribosomal subunit protein uL29 (70 aa).

This sequence belongs to the universal ribosomal protein uL29 family.

In Prochlorococcus marinus (strain NATL1A), this protein is Large ribosomal subunit protein uL29.